Consider the following 701-residue polypeptide: Alpha-1,4-glucan:maltose-1-phosphate maltosyltransferase (701 aa).

Residues 286–317 (HRKGRNNSPTAAPTDVGSPWAIGSDEGGHDTV) form a disordered region. 3 residues coordinate alpha-maltose 1-phosphate: lysine 288, glutamine 348, and aspartate 383. Catalysis depends on aspartate 418, which acts as the Nucleophile. Alpha-maltose 1-phosphate is bound at residue asparagine 419. Glutamate 447 serves as the catalytic Proton donor. 557–558 (KY) provides a ligand contact to alpha-maltose 1-phosphate.

This sequence belongs to the glycosyl hydrolase 13 family. GlgE subfamily. In terms of assembly, homodimer.

The catalysed reaction is alpha-maltose 1-phosphate + [(1-&gt;4)-alpha-D-glucosyl](n) = [(1-&gt;4)-alpha-D-glucosyl](n+2) + phosphate. Its pathway is glycan biosynthesis; glycogen biosynthesis. Its function is as follows. Essential maltosyltransferase that uses maltose 1-phosphate (M1P) as the sugar donor to elongate linear or branched alpha-(1-&gt;4)-glucans. Maltooligosaccharides with a degree of polymerization (DP) superior or equal to 4 are efficient acceptors, with DP5 being optimal in the GlgE-catalyzed polymerization with M1P. Is specific for the alpha-anomer of M1P as substrate, since the beta-anomer of M1P gives no activity. Exhibits an alpha-retaining catalytic mechanism. Is also able to catalyze the reverse reaction in vitro, releasing M1P from glycogen in the presence of inorganic phosphate. Also catalyzes disproportionation reactions through maltosyl transfer between maltooligosaccharides. Is involved in a branched alpha-glucan biosynthetic pathway from trehalose, together with TreS, Mak and GlgB. This Mycobacterium tuberculosis (strain CDC 1551 / Oshkosh) protein is Alpha-1,4-glucan:maltose-1-phosphate maltosyltransferase (glgE).